The following is a 607-amino-acid chain: (R)-limonene synthase 1, chloroplastic (607 aa).

The N-terminal 52 residues, 1–52 (MSSCINPSTLATSVNGFKCLPLATNRAAIRIMAKNKPVQCLVSTKYDNLTVD), are a transit peptide targeting the chloroplast. Asp-343 and Asp-347 together coordinate Mn(2+). Positions 343, 347, 485, 488, and 504 each coordinate substrate. The DDXXD motif motif lies at 343–347 (DDIYD). Asp-488 is a Mn(2+) binding site.

It belongs to the terpene synthase family. Mg(2+) serves as cofactor. The cofactor is Mn(2+).

Its subcellular location is the plastid. The protein localises to the chloroplast. The enzyme catalyses (2E)-geranyl diphosphate = (4R)-limonene + diphosphate. Its activity is regulated as follows. Inhibited by 2-fluorogeranyl diphosphate (FGPP) and 2-fluoroneryl diphosphate (FNPP). Its function is as follows. Catalyzes the conversion of geranyl diphosphate to (+)-(4R)-limonene. Produces exclusively the (+)-enantiomer. Can use neryl diphosphate as substrate. Has no activity with farnesyl diphosphate. This Citrus sinensis (Sweet orange) protein is (R)-limonene synthase 1, chloroplastic.